We begin with the raw amino-acid sequence, 292 residues long: Xyloglucan endotransglucosylase/hydrolase protein 2 (292 aa).

Residues 1 to 24 (MNRIRYCFELVSVLFLMFTANARA) form the signal peptide. Positions 25 to 219 (RGRGAIDFDV…WAYAPFKAQY (195 aa)) constitute a GH16 domain. Glu106 (nucleophile) is an active-site residue. Catalysis depends on Glu110, which acts as the Proton donor. Residues Glu110, 123-125 (QTN), 133-135 (GRE), 198-199 (NW), and Gly203 each bind xyloglucan. Cystine bridges form between Cys227–Cys239 and Cys275–Cys288. Arg280 provides a ligand contact to xyloglucan.

This sequence belongs to the glycosyl hydrolase 16 family. XTH group 1 subfamily. In terms of processing, contains at least one intrachain disulfide bond essential for its enzymatic activity.

The protein localises to the secreted. Its subcellular location is the cell wall. It localises to the extracellular space. The protein resides in the apoplast. The enzyme catalyses breaks a beta-(1-&gt;4) bond in the backbone of a xyloglucan and transfers the xyloglucanyl segment on to O-4 of the non-reducing terminal glucose residue of an acceptor, which can be a xyloglucan or an oligosaccharide of xyloglucan.. Functionally, may catalyze xyloglucan endohydrolysis (XEH) and/or endotransglycosylation (XET). Cleaves and religates xyloglucan polymers, an essential constituent of the primary cell wall, and thereby participates in cell wall construction of growing tissues. In Arabidopsis thaliana (Mouse-ear cress), this protein is Xyloglucan endotransglucosylase/hydrolase protein 2 (XTH2).